We begin with the raw amino-acid sequence, 281 residues long: Shikimate dehydrogenase (NADP(+)) (281 aa).

Shikimate is bound by residues 14 to 16 (SKS) and Thr-61. The active-site Proton acceptor is Lys-65. Asn-86 and Asp-105 together coordinate shikimate. NADP(+) contacts are provided by residues 130–134 (GAGGA), 154–159 (NRTAAK), and Met-221. Shikimate is bound at residue Tyr-223. NADP(+) is bound at residue Gly-245.

The protein belongs to the shikimate dehydrogenase family. Homodimer.

The enzyme catalyses shikimate + NADP(+) = 3-dehydroshikimate + NADPH + H(+). The protein operates within metabolic intermediate biosynthesis; chorismate biosynthesis; chorismate from D-erythrose 4-phosphate and phosphoenolpyruvate: step 4/7. Functionally, involved in the biosynthesis of the chorismate, which leads to the biosynthesis of aromatic amino acids. Catalyzes the reversible NADPH linked reduction of 3-dehydroshikimate (DHSA) to yield shikimate (SA). The sequence is that of Shikimate dehydrogenase (NADP(+)) from Azoarcus sp. (strain BH72).